A 682-amino-acid polypeptide reads, in one-letter code: Methionine synthase reductase (682 aa).

Positions 4-147 (FLIAFGSQTG…EVEPWIEKFF (144 aa)) constitute a Flavodoxin-like domain. 93 to 124 (LLGLGDSNYSSYQTIPRKIDKQLTALGANRLF) provides a ligand contact to FMN. Residues 271 to 516 (TKPFEVLVVS…GKEPARFRLP (246 aa)) form the FAD-binding FR-type domain. Residue Lys293 participates in NADP(+) binding. FAD contacts are provided by residues 455–458 (RPYS) and 488–491 (GLAT). NADP(+) contacts are provided by residues 607–609 (RVQ) and Asp643. Residue Trp681 coordinates FAD.

FAD is required as a cofactor. FMN serves as cofactor.

The enzyme catalyses 2 methylcob(III)alamin-[methionine synthase] + 2 S-adenosyl-L-homocysteine + NADP(+) + H(+) = 2 cob(II)alamin-[methionine synthase] + 2 S-adenosyl-L-methionine + NADPH. In terms of biological role, involved in the reductive regeneration of cob(I)alamin cofactor required for the maintenance of methionine synthase in a functional state. This is Methionine synthase reductase from Caenorhabditis elegans.